The primary structure comprises 174 residues: Protein-export protein SecB (174 aa).

This sequence belongs to the SecB family. Homotetramer, a dimer of dimers. One homotetramer interacts with 1 SecA dimer.

Its subcellular location is the cytoplasm. One of the proteins required for the normal export of preproteins out of the cell cytoplasm. It is a molecular chaperone that binds to a subset of precursor proteins, maintaining them in a translocation-competent state. It also specifically binds to its receptor SecA. The protein is Protein-export protein SecB of Ehrlichia ruminantium (strain Gardel).